A 185-amino-acid chain; its full sequence is UPF0301 protein Csal_0058 (185 aa).

This sequence belongs to the UPF0301 (AlgH) family.

In Chromohalobacter salexigens (strain ATCC BAA-138 / DSM 3043 / CIP 106854 / NCIMB 13768 / 1H11), this protein is UPF0301 protein Csal_0058.